The sequence spans 435 residues: Homogentisate 1,2-dioxygenase (435 aa).

Catalysis depends on His-289, which acts as the Proton acceptor. 2 residues coordinate Fe cation: His-332 and Glu-338. Homogentisate-binding residues include Tyr-347 and His-368. His-368 serves as a coordination point for Fe cation.

This sequence belongs to the homogentisate dioxygenase family. In terms of assembly, hexamer; dimer of trimers. Fe cation is required as a cofactor.

It catalyses the reaction homogentisate + O2 = 4-maleylacetoacetate + H(+). Its pathway is amino-acid degradation; L-phenylalanine degradation; acetoacetate and fumarate from L-phenylalanine: step 4/6. Functionally, involved in the catabolism of homogentisate (2,5-dihydroxyphenylacetate or 2,5-OH-PhAc), a central intermediate in the degradation of phenylalanine and tyrosine. Catalyzes the oxidative ring cleavage of the aromatic ring of homogentisate to yield maleylacetoacetate. The chain is Homogentisate 1,2-dioxygenase from Pseudomonas savastanoi pv. phaseolicola (strain 1448A / Race 6) (Pseudomonas syringae pv. phaseolicola (strain 1448A / Race 6)).